The sequence spans 98 residues: UPF0473 protein LSL_1108 (98 aa).

This sequence belongs to the UPF0473 family.

This is UPF0473 protein LSL_1108 from Ligilactobacillus salivarius (strain UCC118) (Lactobacillus salivarius).